The following is a 332-amino-acid chain: Probable thc operon regulatory protein (332 aa).

The region spanning 227–328 is the HTH araC/xylS-type domain; that stretch reads RLAVDYLEAH…GVSPSEDLRT (102 aa). 2 consecutive DNA-binding regions (H-T-H motif) follow at residues 244-265 and 295-318; these read AQVA…QNSL and VTEI…KQTF.

Probably involved in the positive regulation of the thc operon for the degradation of the thiocarbamate herbicide EPTC. This is Probable thc operon regulatory protein (thcR) from Rhodococcus erythropolis (Arthrobacter picolinophilus).